An 813-amino-acid polypeptide reads, in one-letter code: Raf homolog serine/threonine-protein kinase (813 aa).

A disordered region spans residues 1–79 (MSRINFKKSS…GGAGTSDKEP (79 aa)). A compositionally biased stretch (low complexity) spans 9–23 (SSASTTPTSPHCPSP). Residues 85-161 (KMIMVHLPFD…PGNELWVHSE (77 aa)) enclose the RBD domain. A Phorbol-ester/DAG-type zinc finger spans residues 170–217 (KHAIVRRTFIPPKSCDVCNNPIWMMGFRCEFCQFKFHQRCSSFAPLYC). Residues Cys-184, Cys-187, Cys-198, Cys-201, His-206, Cys-209, and Cys-217 each contribute to the Zn(2+) site. 2 stretches are compositionally biased toward polar residues: residues 258 to 273 (TSGQ…SHPD) and 291 to 301 (SPQNETSQLSP). Disordered stretches follow at residues 258-315 (TSGQ…SAPN), 338-358 (QRLE…QARH), and 383-472 (TPLG…PHHE). The segment covering 338–348 (QRLEEESRDKT) has biased composition (basic and acidic residues). Over residues 386-399 (GSNSPSSTCSSPPG) the composition is skewed to low complexity. Over residues 406–421 (TLGQSPNVSGSTTSSL) the composition is skewed to polar residues. The span at 453 to 462 (SPGERLDAQR) shows a compositional bias: basic and acidic residues. A Protein kinase domain is found at 481-748 (FIIQYKVGSG…VLERLRDIIL (268 aa)). Residues 487–495 (VGSGSFGTV) and Lys-507 each bind ATP. The active-site Proton acceptor is the Asp-602.

This sequence belongs to the protein kinase superfamily. TKL Ser/Thr protein kinase family. RAF subfamily. Interacts with cdf-1 in a zinc-dependent manner which promotes its activity. Requires Zn(2+) as cofactor.

It carries out the reaction L-seryl-[protein] + ATP = O-phospho-L-seryl-[protein] + ADP + H(+). The enzyme catalyses L-threonyl-[protein] + ATP = O-phospho-L-threonyl-[protein] + ADP + H(+). Its function is as follows. Protein kinase that participates in the induction of vulva and has roles in fertility and viability. Acts downstream of the Ras protein let-60. Required for progression of developing oocytes through the pachytene stage. Plays a role in responses to M.nematophilum-mediated bacterial infection by promoting tail swelling and preventing constipation. Positively regulates lifespan upstream of mek-2 and mpk-1. In Caenorhabditis elegans, this protein is Raf homolog serine/threonine-protein kinase (lin-45).